Here is a 320-residue protein sequence, read N- to C-terminus: MARNKIALIGSGMIGGTLAHLAGLKELGDIVLFDIADGIPQGKGLDISQSSPVEGFDVNLTGASDYSAIEGADVCIVTAGVARKPGMSRDDLLGINLKVMEQVGAGIKKYAPNAFVICITNPLDAMVWALQKFSGLPANKVVGMAGVLDSSRFRLFLAKEFNVSVQDVTAFVLGGHGDTMVPLARYSTVGGIPLTDLVTMGWVTKERLEEIIQRTRDGGAEIVGLLKTGSAYYAPAASAIEMAESYLKDKKRVLPCAAHLSGQYGVKDMYVGVPTVIGAGGVERIIEIDLNKTEKEAFDKSVGAVAGLCEACINIAPALK.

NAD(+) contacts are provided by residues 10–15 and aspartate 34; that span reads GSGMIG. Residues arginine 83 and arginine 89 each contribute to the substrate site. NAD(+)-binding positions include asparagine 96 and 119-121; that span reads ITN. Substrate is bound by residues asparagine 121 and arginine 152. The active-site Proton acceptor is the histidine 176.

It belongs to the LDH/MDH superfamily. MDH type 3 family.

The catalysed reaction is (S)-malate + NAD(+) = oxaloacetate + NADH + H(+). In terms of biological role, catalyzes the reversible oxidation of malate to oxaloacetate. This chain is Malate dehydrogenase, found in Rhizobium johnstonii (strain DSM 114642 / LMG 32736 / 3841) (Rhizobium leguminosarum bv. viciae).